Reading from the N-terminus, the 144-residue chain is Maximins 2/H8 type 1 (144 aa).

A signal peptide spans 1–18 (MNFKYIVAVSFLIASAYA). The propeptide occupies 19–43 (RSEENEIQSLSQRDVLEEESLREMR). N70 is modified (asparagine amide). Residues 74-123 (TAEEHEVMKRLETVMRDLDSLDYPEEASERETRGFNQEEIANLFTKKEKR) constitute a propeptide that is removed on maturation. I143 is modified (isoleucine amide).

This sequence belongs to the bombinin family. In terms of tissue distribution, expressed by the skin glands.

Its subcellular location is the secreted. Maximin-2 shows antibacterial activity against both Gram-positive and Gram-negative bacteria. It also shows antimicrobial activity against the fungus C.albicans, but not against A.flavus nor P.uticale. It has little hemolytic activity. In terms of biological role, maximin-H8 shows antimicrobial activity against bacteria and against the fungus C.albicans. Shows strong hemolytic activity. The chain is Maximins 2/H8 type 1 from Bombina maxima (Giant fire-bellied toad).